Here is a 363-residue protein sequence, read N- to C-terminus: UDP-N-acetylglucosamine--N-acetylmuramyl-(pentapeptide) pyrophosphoryl-undecaprenol N-acetylglucosamine transferase (363 aa).

Residues 10–12 (TGG), Asn124, Ser195, Ile250, and Gln295 each bind UDP-N-acetyl-alpha-D-glucosamine.

This sequence belongs to the glycosyltransferase 28 family. MurG subfamily.

The protein localises to the cell membrane. It carries out the reaction di-trans,octa-cis-undecaprenyl diphospho-N-acetyl-alpha-D-muramoyl-L-alanyl-D-glutamyl-meso-2,6-diaminopimeloyl-D-alanyl-D-alanine + UDP-N-acetyl-alpha-D-glucosamine = di-trans,octa-cis-undecaprenyl diphospho-[N-acetyl-alpha-D-glucosaminyl-(1-&gt;4)]-N-acetyl-alpha-D-muramoyl-L-alanyl-D-glutamyl-meso-2,6-diaminopimeloyl-D-alanyl-D-alanine + UDP + H(+). It participates in cell wall biogenesis; peptidoglycan biosynthesis. Its function is as follows. Cell wall formation. Catalyzes the transfer of a GlcNAc subunit on undecaprenyl-pyrophosphoryl-MurNAc-pentapeptide (lipid intermediate I) to form undecaprenyl-pyrophosphoryl-MurNAc-(pentapeptide)GlcNAc (lipid intermediate II). The polypeptide is UDP-N-acetylglucosamine--N-acetylmuramyl-(pentapeptide) pyrophosphoryl-undecaprenol N-acetylglucosamine transferase (Listeria monocytogenes serotype 4a (strain HCC23)).